A 364-amino-acid polypeptide reads, in one-letter code: MKSLLICLVLLELVWLGNGQSRDHQPLAPAFFVFGDSLVDSGNNNYIPTLARANYFPYGIDFGFPTGRFCNGRTVVDYGATYLGLPLVPPYLSPLSIGQNALRGVNYASAAAGILDETGRHYGARTTFNGQISQFEITIELRLRRFFQNPADLRKYLAKSIIGINIGSNDYINNYLMPERYSTSQTYSGEDYADLLIKTLSAQISRLYNLGARKMVLAGSGPLGCIPSQLSMVTGNNTSGCVTKINNMVSMFNSRLKDLANTLNTTLPGSFFVYQNVFDLFHDMVVNPSRYGLVVSNEACCGNGRYGGALTCLPLQQPCLDRNQYVFWDAFHPTETANKIIAHNTFSKSANYSYPISVYELAKL.

A signal peptide spans 1–19 (MKSLLICLVLLELVWLGNG). Catalysis depends on serine 37, which acts as the Nucleophile. N-linked (GlcNAc...) asparagine glycans are attached at residues asparagine 236, asparagine 237, and asparagine 264. Residues aspartate 329 and histidine 332 contribute to the active site. An N-linked (GlcNAc...) asparagine glycan is attached at asparagine 351.

Belongs to the 'GDSL' lipolytic enzyme family.

It is found in the secreted. This is GDSL esterase/lipase 7 (GLIP7) from Arabidopsis thaliana (Mouse-ear cress).